Here is a 259-residue protein sequence, read N- to C-terminus: Protein odd-skipped-related 1 (259 aa).

C2H2-type zinc fingers lie at residues 168–190, 196–218, and 224–246; these read FVCK…ERTH, YTCD…RYIH, and FKCQ…KTLH.

The protein belongs to the Odd C2H2-type zinc-finger protein family.

The protein resides in the nucleus. In terms of biological role, transcriptional repressor. Required for pronephric kidney development. This chain is Protein odd-skipped-related 1, found in Xenopus tropicalis (Western clawed frog).